The following is a 590-amino-acid chain: Probable lysosomal cobalamin transporter (590 aa).

The next 10 membrane-spanning stretches (helical) occupy residues 8–28, 46–66, 94–114, 145–165, 190–210, 314–334, 348–367, 376–396, 421–441, and 508–528; these read LIWV…SIFI, IFTL…VALV, AVAY…VVPF, TVAF…VPIG, ALTF…VLYT, LLSG…MLLT, CGYI…VFVH, YILF…GIAT, ITTV…SMVV, and FFGI…LLVF. A disordered region spans residues 567–590; it reads WEDITGRASRSPQVSGSAGRGTRE.

The protein belongs to the LIMR family. LMBRD1 subfamily.

The protein localises to the lysosome membrane. Functionally, probable lysosomal cobalamin transporter. Required to export cobalamin from lysosomes allowing its conversion to cofactors. The protein is Probable lysosomal cobalamin transporter of Ajellomyces capsulatus (strain NAm1 / WU24) (Darling's disease fungus).